The following is a 950-amino-acid chain: Protocadherin alpha-9 (950 aa).

The N-terminal stretch at M1–G29 is a signal peptide. 6 consecutive Cadherin domains span residues Q30–F133, P134–F242, D243–L350, T351–F455, A456–L565, and G588–S678. Residues Q30 to N697 lie on the Extracellular side of the membrane. Residues N254 and N265 are each glycosylated (N-linked (GlcNAc...) asparagine). N548 is a glycosylation site (N-linked (GlcNAc...) asparagine). The chain crosses the membrane as a helical span at residues V698–Y718. Topologically, residues T719–Q950 are cytoplasmic. Residues P734 to P737 form a PXXP 1 repeat. A 5 X 4 AA repeats of P-X-X-P region spans residues P734 to P894. Disordered regions lie at residues C759–Y808 and I827–Q950. Residues P789–K798 are compositionally biased toward polar residues. 4 PXXP repeats span residues P799–P802, P832–P835, P873–P876, and P891–P894. The segment covering D909–K923 has biased composition (basic and acidic residues).

The protein resides in the cell membrane. Potential calcium-dependent cell-adhesion protein. May be involved in the establishment and maintenance of specific neuronal connections in the brain. This Pan troglodytes (Chimpanzee) protein is Protocadherin alpha-9 (PCDHA9).